Reading from the N-terminus, the 287-residue chain is Endolytic peptidoglycan transglycosylase RlpA (287 aa).

The first 25 residues, 1 to 25, serve as a signal peptide directing secretion; that stretch reads MKLKTGLNLTALLLFMISVAFPAQA. An SPOR domain is found at 209 to 284; that stretch reads LKGTEFYCLK…ANNKPLIVYT (76 aa).

It belongs to the RlpA family.

Lytic transglycosylase with a strong preference for naked glycan strands that lack stem peptides. The protein is Endolytic peptidoglycan transglycosylase RlpA of Haemophilus influenzae (strain ATCC 51907 / DSM 11121 / KW20 / Rd).